The sequence spans 100 residues: ATP synthase subunit c (100 aa).

A run of 2 helical transmembrane segments spans residues 27 to 47 and 72 to 92; these read SVIA…IGMG and FIAL…TLIV.

It belongs to the ATPase C chain family. In terms of assembly, F-type ATPases have 2 components, F(1) - the catalytic core - and F(0) - the membrane proton channel. F(1) has five subunits: alpha(3), beta(3), gamma(1), delta(1), epsilon(1). F(0) has three main subunits: a(1), b(2) and c(10-14). The alpha and beta chains form an alternating ring which encloses part of the gamma chain. F(1) is attached to F(0) by a central stalk formed by the gamma and epsilon chains, while a peripheral stalk is formed by the delta and b chains.

The protein resides in the cell inner membrane. F(1)F(0) ATP synthase produces ATP from ADP in the presence of a proton or sodium gradient. F-type ATPases consist of two structural domains, F(1) containing the extramembraneous catalytic core and F(0) containing the membrane proton channel, linked together by a central stalk and a peripheral stalk. During catalysis, ATP synthesis in the catalytic domain of F(1) is coupled via a rotary mechanism of the central stalk subunits to proton translocation. Its function is as follows. Key component of the F(0) channel; it plays a direct role in translocation across the membrane. A homomeric c-ring of between 10-14 subunits forms the central stalk rotor element with the F(1) delta and epsilon subunits. This chain is ATP synthase subunit c, found in Campylobacter concisus (strain 13826).